The sequence spans 332 residues: Glyceraldehyde-3-phosphate dehydrogenase 1 (332 aa).

Residues 11-12, Asp33, and Arg78 each bind NAD(+); that span reads RI. D-glyceraldehyde 3-phosphate-binding positions include 149-151, Thr180, 209-210, and Arg232; these read SCT and TG. Cys150 functions as the Nucleophile in the catalytic mechanism. Position 314 (Asn314) interacts with NAD(+).

Belongs to the glyceraldehyde-3-phosphate dehydrogenase family. As to quaternary structure, homotetramer.

Its subcellular location is the cytoplasm. It carries out the reaction D-glyceraldehyde 3-phosphate + phosphate + NAD(+) = (2R)-3-phospho-glyceroyl phosphate + NADH + H(+). It participates in carbohydrate degradation; glycolysis; pyruvate from D-glyceraldehyde 3-phosphate: step 1/5. The polypeptide is Glyceraldehyde-3-phosphate dehydrogenase 1 (GPD1) (Candida glabrata (strain ATCC 2001 / BCRC 20586 / JCM 3761 / NBRC 0622 / NRRL Y-65 / CBS 138) (Yeast)).